A 351-amino-acid chain; its full sequence is ATP-dependent protease ATP-binding subunit-like protein (351 aa).

Positions 1–26 (MPYITDMLRDRNSAATPPAEERSEPV) are disordered. ATP is bound at residue 79-86 (GPTGVGKT).

Belongs to the ClpA/ClpB family.

This is ATP-dependent protease ATP-binding subunit-like protein from Rhodococcus erythropolis (Arthrobacter picolinophilus).